We begin with the raw amino-acid sequence, 117 residues long: Prefoldin subunit beta (117 aa).

Belongs to the prefoldin subunit beta family. Heterohexamer of two alpha and four beta subunits.

The protein resides in the cytoplasm. Its function is as follows. Molecular chaperone capable of stabilizing a range of proteins. Seems to fulfill an ATP-independent, HSP70-like function in archaeal de novo protein folding. This is Prefoldin subunit beta (pfdB) from Pyrococcus horikoshii (strain ATCC 700860 / DSM 12428 / JCM 9974 / NBRC 100139 / OT-3).